Here is a 407-residue protein sequence, read N- to C-terminus: MTQRVFQVWKGSNKFILGGRLIFGPDARSLPLTLLLIIVPVVLFCVFVARHLRHEFSPYNAGYAIMVVAILFTIYVLILLFFTSARDPGIVPRNSHPPEEDLRYETTVSADGRQTPSVQIPRTKEVIVNGVSVRVKYCDTCMLYRPPRCSHCSICNNCVERFDHHCPWVGQCIGLRNYRYFFMFVSSSTLLCIYIFSMSAVYIKILMDHQQATVWRAMKESPWAVVLMIYCFIALWFVGGLTAFHLYLISTNQTTYEKLRYRSSHSRSIVYNRGCPNNFLEVFCSKVKPSRNNFRAFIEEEPPRVITLPSTTRESGEAEDENVTRRQKVEDDLDIGDDLMNLSRRCNAEDANNNQPHHTLDIDHERAGSIRTEARHESWGRRSGSWDVAATDVRESRSYATAKDGRG.

Helical transmembrane passes span 29 to 49 and 62 to 82; these read SLPL…VFVA and GYAI…LLFF. The region spanning 136–186 is the DHHC domain; sequence KYCDTCMLYRPPRCSHCSICNNCVERFDHHCPWVGQCIGLRNYRYFFMFVS. Cys166 (S-palmitoyl cysteine intermediate) is an active-site residue. 2 consecutive transmembrane segments (helical) span residues 181–201 and 224–244; these read FFMF…MSAV and AVVL…LTAF. Positions 348 to 368 are disordered; it reads AEDANNNQPHHTLDIDHERAG. A compositionally biased stretch (basic and acidic residues) spans 358–368; the sequence is HTLDIDHERAG. Ser385 carries the phosphoserine modification.

Belongs to the DHHC palmitoyltransferase family. In terms of tissue distribution, expressed in flowers and pollen.

The protein localises to the cell membrane. The catalysed reaction is L-cysteinyl-[protein] + hexadecanoyl-CoA = S-hexadecanoyl-L-cysteinyl-[protein] + CoA. In terms of biological role, S-acyltransferase involved in protein lipid modification. In Arabidopsis thaliana (Mouse-ear cress), this protein is Protein S-acyltransferase 8 (PAT08).